The sequence spans 305 residues: Tyrosine recombinase XerC (305 aa).

A Core-binding (CB) domain is found at 1 to 94; it reads MSSVDEFLTY…ACRSYYAWLL (94 aa). The Tyr recombinase domain maps to 115 to 292; it reads KLPQVLDADE…DFQHLAKVYD (178 aa). Active-site residues include R154, K178, H244, R247, and H270. Y279 (O-(3'-phospho-DNA)-tyrosine intermediate) is an active-site residue.

Belongs to the 'phage' integrase family. XerC subfamily. Forms a cyclic heterotetrameric complex composed of two molecules of XerC and two molecules of XerD.

Its subcellular location is the cytoplasm. Site-specific tyrosine recombinase, which acts by catalyzing the cutting and rejoining of the recombining DNA molecules. The XerC-XerD complex is essential to convert dimers of the bacterial chromosome into monomers to permit their segregation at cell division. It also contributes to the segregational stability of plasmids. This is Tyrosine recombinase XerC from Xanthomonas axonopodis pv. citri (strain 306).